A 95-amino-acid chain; its full sequence is Small ribosomal subunit protein bS18 (95 aa).

This sequence belongs to the bacterial ribosomal protein bS18 family. As to quaternary structure, part of the 30S ribosomal subunit. Forms a tight heterodimer with protein bS6.

Functionally, binds as a heterodimer with protein bS6 to the central domain of the 16S rRNA, where it helps stabilize the platform of the 30S subunit. The protein is Small ribosomal subunit protein bS18 of Rickettsia massiliae (strain Mtu5).